The following is a 111-amino-acid chain: Large ribosomal subunit protein uL22 (111 aa).

The protein belongs to the universal ribosomal protein uL22 family. In terms of assembly, part of the 50S ribosomal subunit.

This protein binds specifically to 23S rRNA; its binding is stimulated by other ribosomal proteins, e.g. L4, L17, and L20. It is important during the early stages of 50S assembly. It makes multiple contacts with different domains of the 23S rRNA in the assembled 50S subunit and ribosome. Functionally, the globular domain of the protein is located near the polypeptide exit tunnel on the outside of the subunit, while an extended beta-hairpin is found that lines the wall of the exit tunnel in the center of the 70S ribosome. The polypeptide is Large ribosomal subunit protein uL22 (Legionella pneumophila (strain Lens)).